Reading from the N-terminus, the 364-residue chain is MADPAVGAPAGMLIELTHRCPLHCPYCSNPLELVRREAELTCEQWTDILTQARELGVVQMHFSGGEPLARPDLPDLVGHARRLGAYVNLVTSGVGLTAERAHDLARRGVDHVQLSLQDADPAAGQAIAGARVHTAKLEAARAVTAAGLPLTVNIVLHRGNIDRTGRMVDLAVDLGADRIELANTQYYGWGLRNRAALMPTAAQLAAAREAVRHARTRYAGGPELVYVAADYYDDRPKPCMDGWGSTQLTVTPAGDVLPCPAAYAITTLPVENALRRPLSEIWYASRSFNAYRGTGWMREPCRTCPERHADHGGCRCQAFQLTGDAAATDPACGLSPHRSLVDAALAEVTDGPVPAFVPRGPVPA.

The Radical SAM core domain maps to 6–222 (VGAPAGMLIE…HARTRYAGGP (217 aa)). The [4Fe-4S] cluster site is built by Cys-20, Cys-24, and Cys-27.

Belongs to the radical SAM superfamily. PqqE family. Interacts with PqqD. The interaction is necessary for activity of PqqE. [4Fe-4S] cluster serves as cofactor.

It catalyses the reaction [PQQ precursor protein] + S-adenosyl-L-methionine = E-Y cross-linked-[PQQ precursor protein] + 5'-deoxyadenosine + L-methionine + H(+). Its pathway is cofactor biosynthesis; pyrroloquinoline quinone biosynthesis. Functionally, catalyzes the cross-linking of a glutamate residue and a tyrosine residue in the PqqA protein as part of the biosynthesis of pyrroloquinoline quinone (PQQ). This is PqqA peptide cyclase from Streptomyces rochei (Streptomyces parvullus).